Reading from the N-terminus, the 207-residue chain is Ras-related protein Rab-8A (207 aa).

Positions 17, 18, 19, 20, 21, 22, 23, 35, 39, and 40 each coordinate GTP. Residue T22 coordinates Mg(2+). Short sequence motifs (switch) lie at residues 31–45 (DAFNSTFISTIGIDF) and 63–80 (DTAGQERFRTITTAYYRG). Mg(2+) contacts are provided by T40 and D63. G66 contributes to the GTP binding site. T72 carries the post-translational modification Phosphothreonine. N121, K122, D124, A152, and K153 together coordinate GTP. Phosphoserine occurs at positions 181 and 185. The residue at position 204 (C204) is a Cysteine methyl ester. A lipid anchor (S-geranylgeranyl cysteine) is attached at C204. A propeptide spans 205-207 (VLL) (removed in mature form).

This sequence belongs to the small GTPase superfamily. Rab family. As to quaternary structure, interacts (GTP-bound form) with MICALL1; regulates RAB8A association with recycling endosomes. Interacts with MICALL2; competes with RAB13 and is involved in E-cadherin endocytic recycling. Interacts (GTP-bound form) with MICAL1, MICALCL, MICAL3, EHBP1 and EHBP1L1; at least in case of MICAL1, MICALCL, MICAL3 and EHBP1L1 two molecules of RAB8A can bind to one molecule of the effector protein; ternary complexes of RAB8A, RAB13 and either MICAL1 or EHBP1L1 are possible. Interacts with EHD1. Interacts with MAP4K2 and SYTL4. Interacts with SGSM1 and SGSM3. Interacts with RABIF, RIMS2, RPH3A and RPH3A. Interacts with OPTN. Interacts with RAB3IP, RAB3IP functions as guanine exchange factor (GEF). Interacts with MYO5B. Interacts with CIMAP3. Interacts with BIRC6/bruce. Interacts with OCRL. Interacts with AHI1. Interacts with DCDC1. Interacts with LRRK2; interaction facilitates phosphorylation of Thr-72. Interacts with RAB31P, GDI1, GDI2, CHM, CHML, RABGGTA, RABGGTB, TBC1D15 and INPP5B; these interactions are dependent on Thr-72 not being phosphorylated. Interacts with RILPL1 and RILPL2; these interactions are dependent on the phosphorylation of Thr-72 by LRRK2. Interacts with DZIP1; prevents inhibition by the GDP-dissociation inhibitor GDI2. Interacts (in GDP-bound form) with RAB3IP/Rabin8, RAB3IP functions as guanine exchange factor (GEF) towards RAB8A. Interacts (in GDP-bound form) with RPGR, RPGR functions as GEF towards RAB8A. It depends on Mg(2+) as a cofactor. Post-translationally, phosphorylation of Thr-72 in the switch II region by LRRK2 prevents the association of RAB regulatory proteins, including CHM, CHML and RAB GDP dissociation inhibitors GDI1 and GDI2. Phosphorylation by LRRK2 is required for localization to stressed lysosomes.

It localises to the cell membrane. The protein resides in the golgi apparatus. It is found in the endosome membrane. Its subcellular location is the recycling endosome membrane. The protein localises to the cell projection. It localises to the cilium. The protein resides in the cytoplasmic vesicle. It is found in the phagosome membrane. Its subcellular location is the cytoplasm. The protein localises to the cytoskeleton. It localises to the microtubule organizing center. The protein resides in the centrosome. It is found in the centriole. Its subcellular location is the cilium basal body. The protein localises to the midbody. It localises to the lysosome. The catalysed reaction is GTP + H2O = GDP + phosphate + H(+). Its activity is regulated as follows. Regulated by guanine nucleotide exchange factors (GEFs) such as RAB3IP/Rabin8 and RPGR which promote the exchange of bound GDP for free GTP, GTPase activating proteins (GAPs) which increase the GTP hydrolysis activity, and GDP dissociation inhibitors (GDIs) which inhibit the dissociation of the nucleotide from the GTPase. Activated in response to insulin. In terms of biological role, the small GTPases Rab are key regulators of intracellular membrane trafficking, from the formation of transport vesicles to their fusion with membranes. Rabs cycle between an inactive GDP-bound form and an active GTP-bound form that is able to recruit to membranes different sets of downstream effectors directly responsible for vesicle formation, movement, tethering and fusion. RAB8A is involved in polarized vesicular trafficking and neurotransmitter release. Together with RAB11A, RAB3IP, the exocyst complex, PARD3, PRKCI, ANXA2, CDC42 and DNMBP promotes transcytosis of PODXL to the apical membrane initiation sites (AMIS), apical surface formation and lumenogenesis. Regulates the compacted morphology of the Golgi. Together with MYO5B and RAB11A participates in epithelial cell polarization. Also involved in membrane trafficking to the cilium and ciliogenesis. Together with MICALL2, may also regulate adherens junction assembly. May play a role in insulin-induced transport to the plasma membrane of the glucose transporter GLUT4 and therefore play a role in glucose homeostasis. Involved in autophagy. Participates in the export of a subset of neosynthesized proteins through a Rab8-Rab10-Rab11-dependent endososomal export route. Targeted to and stabilized on stressed lysosomes through LRRK2 phosphorylation. Suppresses stress-induced lysosomal enlargement through EHBP1 and EHNP1L1 effector proteins. This Bos taurus (Bovine) protein is Ras-related protein Rab-8A (RAB8A).